We begin with the raw amino-acid sequence, 506 residues long: F-box protein At4g02760 (506 aa).

The F-box domain occupies 115 to 161 (TSWPLLPELTIKVFSMLDTKSLMQASACCTMFNKCAMDRVCYSHIDL). Positions 452-506 (TFVAEFRSPSPSESDVRSPSPSSSSDSSSSSDSSSSSSSGESSDESGTEEEEDED) are disordered. The segment covering 459-492 (SPSPSESDVRSPSPSSSSDSSSSSDSSSSSSSGE) has biased composition (low complexity). A compositionally biased stretch (acidic residues) spans 493–506 (SSDESGTEEEEDED).

The protein is F-box protein At4g02760 of Arabidopsis thaliana (Mouse-ear cress).